Consider the following 260-residue polypeptide: Triosephosphate isomerase (260 aa).

10–12 provides a ligand contact to substrate; it reads NWK. Histidine 100 serves as the catalytic Electrophile. The active-site Proton acceptor is the glutamate 172. Substrate is bound by residues glycine 178, serine 218, and 239–240; that span reads GG.

Belongs to the triosephosphate isomerase family. As to quaternary structure, homodimer.

Its subcellular location is the cytoplasm. The catalysed reaction is D-glyceraldehyde 3-phosphate = dihydroxyacetone phosphate. It functions in the pathway carbohydrate biosynthesis; gluconeogenesis. The protein operates within carbohydrate degradation; glycolysis; D-glyceraldehyde 3-phosphate from glycerone phosphate: step 1/1. Involved in the gluconeogenesis. Catalyzes stereospecifically the conversion of dihydroxyacetone phosphate (DHAP) to D-glyceraldehyde-3-phosphate (G3P). In Corynebacterium diphtheriae (strain ATCC 700971 / NCTC 13129 / Biotype gravis), this protein is Triosephosphate isomerase.